The following is a 179-amino-acid chain: Large ribosomal subunit protein uL5 (179 aa).

Belongs to the universal ribosomal protein uL5 family. In terms of assembly, part of the 50S ribosomal subunit; part of the 5S rRNA/L5/L18/L25 subcomplex. Contacts the 5S rRNA and the P site tRNA. Forms a bridge to the 30S subunit in the 70S ribosome.

This is one of the proteins that bind and probably mediate the attachment of the 5S RNA into the large ribosomal subunit, where it forms part of the central protuberance. In the 70S ribosome it contacts protein S13 of the 30S subunit (bridge B1b), connecting the 2 subunits; this bridge is implicated in subunit movement. Contacts the P site tRNA; the 5S rRNA and some of its associated proteins might help stabilize positioning of ribosome-bound tRNAs. In Photorhabdus laumondii subsp. laumondii (strain DSM 15139 / CIP 105565 / TT01) (Photorhabdus luminescens subsp. laumondii), this protein is Large ribosomal subunit protein uL5.